A 241-amino-acid polypeptide reads, in one-letter code: tRNA (guanine-N(1)-)-methyltransferase (241 aa).

Residues glycine 123 and 143–148 (IGDYVL) each bind S-adenosyl-L-methionine.

It belongs to the RNA methyltransferase TrmD family. As to quaternary structure, homodimer.

The protein localises to the cytoplasm. It catalyses the reaction guanosine(37) in tRNA + S-adenosyl-L-methionine = N(1)-methylguanosine(37) in tRNA + S-adenosyl-L-homocysteine + H(+). Its function is as follows. Specifically methylates guanosine-37 in various tRNAs. This is tRNA (guanine-N(1)-)-methyltransferase from Roseobacter denitrificans (strain ATCC 33942 / OCh 114) (Erythrobacter sp. (strain OCh 114)).